Here is a 158-residue protein sequence, read N- to C-terminus: uncharacterized protein (158 aa).

The 62-residue stretch at 12 to 73 (LDEIDRAILR…LINPFKAGYE (62 aa)) folds into the HTH asnC-type domain. A DNA-binding region (H-T-H motif) is located at residues 31-50 (YSEISRRINVPESTVRARVN).

This is an uncharacterized protein from Pyrococcus abyssi (strain GE5 / Orsay).